The chain runs to 111 residues: Probable 4-amino-4-deoxy-L-arabinose-phosphoundecaprenol flippase subunit ArnE (111 aa).

The Cytoplasmic segment spans residues 1–35 (MIWLTLVFASLLSVAGQLCQKQATCFATVNKRRKH). A helical transmembrane segment spans residues 36 to 56 (IVLWLGLALACLGLAMVLWLL). One can recognise an EamA domain in the interval 40–109 (LGLALACLGL…IIGGIVILGS (70 aa)). At 57–60 (VLQN) the chain is on the periplasmic side. Residues 61 to 81 (VPVGIAYPMLSLNFVWVTLAA) traverse the membrane as a helical segment. At 82 to 87 (VKLWHE) the chain is on the cytoplasmic side. A helical membrane pass occupies residues 88-108 (PVSLRHWCGVAFIIGGIVILG). Topologically, residues 109–111 (STV) are periplasmic.

Belongs to the ArnE family. Heterodimer of ArnE and ArnF.

The protein localises to the cell inner membrane. It functions in the pathway bacterial outer membrane biogenesis; lipopolysaccharide biosynthesis. Its function is as follows. Translocates 4-amino-4-deoxy-L-arabinose-phosphoundecaprenol (alpha-L-Ara4N-phosphoundecaprenol) from the cytoplasmic to the periplasmic side of the inner membrane. The protein is Probable 4-amino-4-deoxy-L-arabinose-phosphoundecaprenol flippase subunit ArnE of Escherichia coli O6:H1 (strain CFT073 / ATCC 700928 / UPEC).